The following is a 216-amino-acid chain: 3-isopropylmalate dehydratase small subunit 2 (216 aa).

Belongs to the LeuD family. LeuD type 1 subfamily. In terms of assembly, heterodimer of LeuC and LeuD.

The catalysed reaction is (2R,3S)-3-isopropylmalate = (2S)-2-isopropylmalate. It participates in amino-acid biosynthesis; L-leucine biosynthesis; L-leucine from 3-methyl-2-oxobutanoate: step 2/4. In terms of biological role, catalyzes the isomerization between 2-isopropylmalate and 3-isopropylmalate, via the formation of 2-isopropylmaleate. This chain is 3-isopropylmalate dehydratase small subunit 2, found in Bordetella pertussis (strain Tohama I / ATCC BAA-589 / NCTC 13251).